The following is a 635-amino-acid chain: Threonine--tRNA ligase (635 aa).

The TGS domain maps to 1 to 61; the sequence is MVSIRLPDGS…DRDAALAIIT (61 aa). A catalytic region spans residues 242–533; it reads DHRKLGKQLD…LIEHHAGAMP (292 aa). Residues cysteine 333, histidine 384, and histidine 510 each coordinate Zn(2+).

The protein belongs to the class-II aminoacyl-tRNA synthetase family. Homodimer. The cofactor is Zn(2+).

It is found in the cytoplasm. It carries out the reaction tRNA(Thr) + L-threonine + ATP = L-threonyl-tRNA(Thr) + AMP + diphosphate + H(+). Functionally, catalyzes the attachment of threonine to tRNA(Thr) in a two-step reaction: L-threonine is first activated by ATP to form Thr-AMP and then transferred to the acceptor end of tRNA(Thr). Also edits incorrectly charged L-seryl-tRNA(Thr). The sequence is that of Threonine--tRNA ligase from Burkholderia ambifaria (strain ATCC BAA-244 / DSM 16087 / CCUG 44356 / LMG 19182 / AMMD) (Burkholderia cepacia (strain AMMD)).